The primary structure comprises 92 residues: YcgL domain-containing protein Sfri_1738 (92 aa).

One can recognise a YcgL domain in the interval 1-85 (MICAVYKSGR…PQINLLEQHK (85 aa)).

This is YcgL domain-containing protein Sfri_1738 from Shewanella frigidimarina (strain NCIMB 400).